The sequence spans 185 residues: Ribosome-recycling factor (185 aa).

It belongs to the RRF family.

Its subcellular location is the cytoplasm. Its function is as follows. Responsible for the release of ribosomes from messenger RNA at the termination of protein biosynthesis. May increase the efficiency of translation by recycling ribosomes from one round of translation to another. This is Ribosome-recycling factor from Klebsiella pneumoniae (strain 342).